The chain runs to 220 residues: Probable septum site-determining protein MinC (220 aa).

It belongs to the MinC family. As to quaternary structure, interacts with MinD and FtsZ.

Cell division inhibitor that blocks the formation of polar Z ring septums. Rapidly oscillates between the poles of the cell to destabilize FtsZ filaments that have formed before they mature into polar Z rings. Prevents FtsZ polymerization. In Vibrio vulnificus (strain CMCP6), this protein is Probable septum site-determining protein MinC.